The sequence spans 420 residues: Disease resistance protein CHS1 (420 aa).

The 156-residue stretch at 12–167 (RELDVFLSFS…QIADDIRLMF (156 aa)) folds into the TIR domain. E86 is an active-site residue. The NB-ARC domain maps to 185–406 (MKALYALLAL…KDIKEVWKIM (222 aa)).

As to expression, mostly expressed in leaves and flowers (mainly in sepals), and, at a lower intensity, in stems. Present at low levels in roots and seeds.

The protein localises to the cytoplasm. Its subcellular location is the nucleus. It carries out the reaction NAD(+) + H2O = ADP-D-ribose + nicotinamide + H(+). Its function is as follows. Confers resistance to low temperatures by limiting chloroplast damage and cell death, thus maintaining growth homeostasis. Regulates steryl-esters and sterols accumulation. Limits leaf necrosis associated with virulent bacterial infection (e.g. Pseudomonas syringae pv. tomato DC3000). The sequence is that of Disease resistance protein CHS1 from Arabidopsis thaliana (Mouse-ear cress).